A 245-amino-acid chain; its full sequence is Biosynthetic peptidoglycan transglycosylase (245 aa).

A helical transmembrane segment spans residues 24–44; it reads LVVIGAWLAGILLFSFLPVPF.

Belongs to the glycosyltransferase 51 family.

Its subcellular location is the cell inner membrane. It catalyses the reaction [GlcNAc-(1-&gt;4)-Mur2Ac(oyl-L-Ala-gamma-D-Glu-L-Lys-D-Ala-D-Ala)](n)-di-trans,octa-cis-undecaprenyl diphosphate + beta-D-GlcNAc-(1-&gt;4)-Mur2Ac(oyl-L-Ala-gamma-D-Glu-L-Lys-D-Ala-D-Ala)-di-trans,octa-cis-undecaprenyl diphosphate = [GlcNAc-(1-&gt;4)-Mur2Ac(oyl-L-Ala-gamma-D-Glu-L-Lys-D-Ala-D-Ala)](n+1)-di-trans,octa-cis-undecaprenyl diphosphate + di-trans,octa-cis-undecaprenyl diphosphate + H(+). It functions in the pathway cell wall biogenesis; peptidoglycan biosynthesis. Its function is as follows. Peptidoglycan polymerase that catalyzes glycan chain elongation from lipid-linked precursors. The polypeptide is Biosynthetic peptidoglycan transglycosylase (Pectobacterium atrosepticum (strain SCRI 1043 / ATCC BAA-672) (Erwinia carotovora subsp. atroseptica)).